Here is a 279-residue protein sequence, read N- to C-terminus: 4-hydroxy-3-methylbut-2-enyl diphosphate reductase (279 aa).

A [4Fe-4S] cluster-binding site is contributed by C12. 2 residues coordinate (2E)-4-hydroxy-3-methylbut-2-enyl diphosphate: H36 and H70. Dimethylallyl diphosphate-binding residues include H36 and H70. 2 residues coordinate isopentenyl diphosphate: H36 and H70. C92 is a binding site for [4Fe-4S] cluster. H120 serves as a coordination point for (2E)-4-hydroxy-3-methylbut-2-enyl diphosphate. H120 serves as a coordination point for dimethylallyl diphosphate. H120 contributes to the isopentenyl diphosphate binding site. The active-site Proton donor is the E122. T158 contributes to the (2E)-4-hydroxy-3-methylbut-2-enyl diphosphate binding site. Position 186 (C186) interacts with [4Fe-4S] cluster. (2E)-4-hydroxy-3-methylbut-2-enyl diphosphate is bound by residues S214, S215, N216, and S258. Dimethylallyl diphosphate-binding residues include S214, S215, N216, and S258. Isopentenyl diphosphate-binding residues include S214, S215, N216, and S258.

The protein belongs to the IspH family. Requires [4Fe-4S] cluster as cofactor.

The catalysed reaction is isopentenyl diphosphate + 2 oxidized [2Fe-2S]-[ferredoxin] + H2O = (2E)-4-hydroxy-3-methylbut-2-enyl diphosphate + 2 reduced [2Fe-2S]-[ferredoxin] + 2 H(+). The enzyme catalyses dimethylallyl diphosphate + 2 oxidized [2Fe-2S]-[ferredoxin] + H2O = (2E)-4-hydroxy-3-methylbut-2-enyl diphosphate + 2 reduced [2Fe-2S]-[ferredoxin] + 2 H(+). Its pathway is isoprenoid biosynthesis; dimethylallyl diphosphate biosynthesis; dimethylallyl diphosphate from (2E)-4-hydroxy-3-methylbutenyl diphosphate: step 1/1. The protein operates within isoprenoid biosynthesis; isopentenyl diphosphate biosynthesis via DXP pathway; isopentenyl diphosphate from 1-deoxy-D-xylulose 5-phosphate: step 6/6. Functionally, catalyzes the conversion of 1-hydroxy-2-methyl-2-(E)-butenyl 4-diphosphate (HMBPP) into a mixture of isopentenyl diphosphate (IPP) and dimethylallyl diphosphate (DMAPP). Acts in the terminal step of the DOXP/MEP pathway for isoprenoid precursor biosynthesis. The sequence is that of 4-hydroxy-3-methylbut-2-enyl diphosphate reductase from Campylobacter fetus subsp. fetus (strain 82-40).